A 534-amino-acid chain; its full sequence is Nuclear polyadenylated RNA-binding protein 4 (534 aa).

The disordered stretch occupies residues 1-154; the sequence is MSSDEEDFND…TKEERSKADL (154 aa). 2 positions are modified to phosphoserine: Ser2 and Ser3. Over residues 13–30 the composition is skewed to basic and acidic residues; sequence GDDKPTTTEEVKKEEEQN. Over residues 37 to 78 the composition is skewed to low complexity; that stretch reads SQLDQLAALQALSSSLNKLNNPNSNNSSSNNSNQDTSSSKQD. Phosphoserine occurs at positions 51 and 87. The span at 81–98 shows a compositional bias: basic and acidic residues; sequence ANDKEGSNEDTKNEKKQE. Low complexity-rich tracts occupy residues 99–112 and 121–144; these read SATSANANANASSA and QLQQTMSQFQQPSSQSPPQQQVTQ. The span at 145-154 shows a compositional bias: basic and acidic residues; sequence TKEERSKADL. RRM domains follow at residues 159-241 and 243-320; these read CKMF…EQDK and GKIF…RAEP. Ser206 carries the phosphoserine modification. Disordered regions lie at residues 316–354 and 415–534; these read KRAEPRHMQQKSSNNGGNNGGNNMNRRGGNFGNQGDFNQ and MPPN…PYNR. Residues 336 to 354 show a composition bias toward low complexity; sequence GNNMNRRGGNFGNQGDFNQ. Residues 420–459 are compositionally biased toward polar residues; the sequence is MTLNQPQQDSNATQGSPAPSDSDNNKSNDVQTIGNTSNTD. Thr458 is modified (phosphothreonine). 2 positions are modified to phosphoserine: Ser460 and Ser462. Residues 460–475 show a composition bias toward low complexity; that stretch reads SGSPPLNLPNGPKGPS. A compositionally biased stretch (basic and acidic residues) spans 478-505; it reads NDDHNSGYGYNRDRGDRDRNDRDRDYNH. Arg519 is modified (omega-N-methylarginine). The segment covering 523–534 has biased composition (low complexity); it reads NRRNNGYHPYNR.

As to quaternary structure, interacts with NAM7. Methylated by HMT1. The methylation is required for nuclear export.

It localises to the cytoplasm. The protein localises to the nucleus. It is found in the stress granule. Its function is as follows. RNA-binding protein, which is involved in the polyadenylation-dependent pre-mRNA 3'-end formation and cooperates with the cleavage factor CFIA complex and the cleavage and polyadenylation factor (CPF) complex. May be involved in regulation of poly(A) site selection. Is involved in nonsense-mediated mRNA decay. Seems to bind to an RNA downstream sequence element (DSE) located 3' of a nonsense codon and may mark the transcript for decay. The protein is Nuclear polyadenylated RNA-binding protein 4 of Saccharomyces cerevisiae (strain ATCC 204508 / S288c) (Baker's yeast).